The following is a 561-amino-acid chain: Sesquiterpene synthase 2 (561 aa).

Mg(2+)-binding residues include Asp313, Asp317, Asp458, and Glu466. Residues 313-317 (DDIYD) carry the DDXXD motif motif.

Belongs to the terpene synthase family. Tpsa subfamily. Mn(2+) is required as a cofactor. Mg(2+) serves as cofactor.

It localises to the cytoplasm. It catalyses the reaction (2E,6E)-farnesyl diphosphate + H2O = kunzeaol + diphosphate. Its pathway is secondary metabolite biosynthesis; terpenoid biosynthesis. Functionally, involved in the biosynthesis of kunzeaol. Produces mainly (-)-germacrene D along with gamma-cadinene. This is Sesquiterpene synthase 2 (STS2) from Thapsia garganica (Deadly carrot).